The sequence spans 436 residues: Glutamate-1-semialdehyde 2,1-aminomutase (436 aa).

Lysine 274 is modified (N6-(pyridoxal phosphate)lysine).

This sequence belongs to the class-III pyridoxal-phosphate-dependent aminotransferase family. HemL subfamily. Homodimer. It depends on pyridoxal 5'-phosphate as a cofactor.

It is found in the cytoplasm. It catalyses the reaction (S)-4-amino-5-oxopentanoate = 5-aminolevulinate. The protein operates within porphyrin-containing compound metabolism; protoporphyrin-IX biosynthesis; 5-aminolevulinate from L-glutamyl-tRNA(Glu): step 2/2. The sequence is that of Glutamate-1-semialdehyde 2,1-aminomutase from Albidiferax ferrireducens (strain ATCC BAA-621 / DSM 15236 / T118) (Rhodoferax ferrireducens).